A 432-amino-acid polypeptide reads, in one-letter code: MGASLKKIEKSVATLELTIPKEKFEEGLDYAFKKNASKFNVPGFRKGKAPRFLVERYYGEGVLYEDAIEYVFHEAYQEALKTFNLEPVDYPDINILQIGKGKDLVLEATVAVMPEVELGEYKGIEIEKIEYDVYDGDVEYELEKLRQQNARIIPVEGRPAEQGDIAVIDFEGYIDDKPFEGGKGENYELELGSNTFVPGFEDQIISHNVGETFDVTVTFPEDYRVEELKGKTAVFKVTLKALNKKELPELDDEFAKDVSEFETLEELKQDIRKKLEEKNKREAENEMKEKAVMKVVENAKVDIPDVMVERQIDLSLRDLDYNLRLQGLDLNTYLSITGKTIQDLRKEMWEGALNRVKTQLVIDKIAKVENIEATEEELENKLKELAESYRVNLEEFKKSLTESQINGIKEDIAYYKTIDFIFNQCKIVSKEE.

One can recognise a PPIase FKBP-type domain in the interval 163 to 248 (GDIAVIDFEG…LKALNKKELP (86 aa)).

It belongs to the FKBP-type PPIase family. Tig subfamily.

It localises to the cytoplasm. It carries out the reaction [protein]-peptidylproline (omega=180) = [protein]-peptidylproline (omega=0). Involved in protein export. Acts as a chaperone by maintaining the newly synthesized protein in an open conformation. Functions as a peptidyl-prolyl cis-trans isomerase. This is Trigger factor from Caldanaerobacter subterraneus subsp. tengcongensis (strain DSM 15242 / JCM 11007 / NBRC 100824 / MB4) (Thermoanaerobacter tengcongensis).